The following is a 372-amino-acid chain: N-methyl-L-tryptophan oxidase (372 aa).

FAD is bound at residue 4–34 (DLIIIGSGSVGAAAGYYATRAGLNVLMTDAH). Cysteine 308 is modified (S-8alpha-FAD cysteine).

The protein belongs to the MSOX/MTOX family. MTOX subfamily. As to quaternary structure, monomer. FAD serves as cofactor.

It carries out the reaction N(alpha)-methyl-L-tryptophan + O2 + H2O = L-tryptophan + formaldehyde + H2O2. In terms of biological role, catalyzes the oxidative demethylation of N-methyl-L-tryptophan. The sequence is that of N-methyl-L-tryptophan oxidase from Shigella dysenteriae serotype 1 (strain Sd197).